The primary structure comprises 138 residues: Putative nickel-responsive regulator (138 aa).

Ni(2+) contacts are provided by His76, His87, His89, and Cys95.

This sequence belongs to the transcriptional regulatory CopG/NikR family. Requires Ni(2+) as cofactor.

Transcriptional regulator. This chain is Putative nickel-responsive regulator, found in Pseudomonas putida (strain ATCC 47054 / DSM 6125 / CFBP 8728 / NCIMB 11950 / KT2440).